A 96-amino-acid polypeptide reads, in one-letter code: Venom protein 3.1 (96 aa).

The signal sequence occupies residues 1–25; that stretch reads MKFSLISVFLFAVFLSNENIFQAIA. The disordered stretch occupies residues 45 to 84; that stretch reads EAVMSSSLTNEEESRNWPHRATRNTLEKGQKRSPAARSEI.

Belongs to the non-disulfide-bridged peptide (NDBP) superfamily. In terms of tissue distribution, expressed by the venom gland.

Its subcellular location is the secreted. The protein is Venom protein 3.1 of Lychas mucronatus (Chinese swimming scorpion).